The primary structure comprises 106 residues: Iron-sulfur cluster assembly protein CyaY (106 aa).

This sequence belongs to the frataxin family.

Functionally, involved in iron-sulfur (Fe-S) cluster assembly. May act as a regulator of Fe-S biogenesis. In Escherichia coli O6:H1 (strain CFT073 / ATCC 700928 / UPEC), this protein is Iron-sulfur cluster assembly protein CyaY.